Consider the following 89-residue polypeptide: Strongylocin 2 (89 aa).

Positions 1–22 (MNIRTASFTFIVVMMILSQTMA) are cleaved as a signal peptide. Positions 23-38 (DRFFNEPEEDDHLVES) are excised as a propeptide. At W39 the chain carries 6'-bromotryptophan.

Contains 3 disulfide bonds.

Functionally, has antimicrobial activity against Gram-negative bacteria and Gram-positive bacteria with minimum inhibitory concentration (MIC) between 0.78 uM and 3.13 uM. In Echinus esculentus (Sea urchin), this protein is Strongylocin 2.